The following is a 196-amino-acid chain: Protein/nucleic acid deglycase 3 (196 aa).

The active-site Nucleophile is C106. C106 is subject to Cysteine sulfinic acid (-SO2H); alternate.

This sequence belongs to the peptidase C56 family. As to quaternary structure, homodimer. Cys-106 is easily oxidized to sulfinic acid.

It catalyses the reaction N(omega)-(1-hydroxy-2-oxopropyl)-L-arginyl-[protein] + H2O = lactate + L-arginyl-[protein] + H(+). The enzyme catalyses N(6)-(1-hydroxy-2-oxopropyl)-L-lysyl-[protein] + H2O = lactate + L-lysyl-[protein] + H(+). It carries out the reaction S-(1-hydroxy-2-oxopropyl)-L-cysteinyl-[protein] + H2O = lactate + L-cysteinyl-[protein] + H(+). The catalysed reaction is N(omega)-(1-hydroxy-2-oxoethyl)-L-arginyl-[protein] + H2O = L-arginyl-[protein] + glycolate + H(+). It catalyses the reaction N(6)-(1-hydroxy-2-oxoethyl)-L-lysyl-[protein] + H2O = glycolate + L-lysyl-[protein] + H(+). The enzyme catalyses S-(1-hydroxy-2-oxoethyl)-L-cysteinyl-[protein] + H2O = glycolate + L-cysteinyl-[protein] + H(+). It carries out the reaction N(2)-(1-hydroxy-2-oxopropyl)-dGTP + H2O = lactate + dGTP + H(+). The catalysed reaction is N(2)-(1-hydroxy-2-oxopropyl)-GTP + H2O = lactate + GTP + H(+). It catalyses the reaction N(2)-(1-hydroxy-2-oxopropyl)-GDP + H2O = lactate + GDP + H(+). The enzyme catalyses N(2)-(1-hydroxy-2-oxopropyl)-GMP + H2O = lactate + GMP + H(+). It carries out the reaction N(2)-(1-hydroxy-2-oxoethyl)-dGTP + H2O = dGTP + glycolate + H(+). The catalysed reaction is N(2)-(1-hydroxy-2-oxoethyl)-GTP + H2O = glycolate + GTP + H(+). It catalyses the reaction N(2)-(1-hydroxy-2-oxoethyl)-GDP + H2O = glycolate + GDP + H(+). The enzyme catalyses N(2)-(1-hydroxy-2-oxoethyl)-GMP + H2O = glycolate + GMP + H(+). It carries out the reaction an N(2)-(1-hydroxy-2-oxopropyl)-guanosine in RNA + H2O = a guanosine in RNA + lactate + H(+). The catalysed reaction is an N(2)-(1-hydroxy-2-oxopropyl)-2'-deoxyguanosine in DNA + H2O = a 2'-deoxyguanosine in DNA + lactate + H(+). It catalyses the reaction an N(2)-(1-hydroxy-2-oxoethyl)-guanosine in RNA + H2O = a guanosine in RNA + glycolate + H(+). The enzyme catalyses an N(2)-(1-hydroxy-2-oxoethyl)-2'-deoxyguanosine in DNA + H2O = a 2'-deoxyguanosine in DNA + glycolate + H(+). Its activity is regulated as follows. Glyoxalase activity is inhibited by zinc ions. Active as a chaperone in both its reduced and oxidized states, and is more active in its oxidized form. Functionally, protein and nucleotide deglycase that catalyzes the deglycation of the Maillard adducts formed between amino groups of proteins or nucleotides and reactive carbonyl groups of glyoxals. Thus, functions as a protein deglycase that repairs methylglyoxal- and glyoxal-glycated proteins, and releases repaired proteins and lactate or glycolate, respectively. Deglycates cysteine, arginine and lysine residues in proteins, and thus reactivates these proteins by reversing glycation by glyoxals. Is able to repair glycated serum albumin, collagen, glyceraldehyde-3-phosphate dehydrogenase, and fructose biphosphate aldolase. Acts on early glycation intermediates (hemithioacetals and aminocarbinols), preventing the formation of Schiff bases and advanced glycation endproducts (AGE) that cause irreversible damage. Also functions as a nucleotide deglycase able to repair glycated guanine in the free nucleotide pool (GTP, GDP, GMP, dGTP) and in DNA and RNA. Is thus involved in a major nucleotide repair system named guanine glycation repair (GG repair), dedicated to reversing methylglyoxal and glyoxal damage via nucleotide sanitization and direct nucleic acid repair. However, is less efficient than Hsp31 and YhbO, suggesting that YajL might be preferentially dedicated to protein repair. Displays a covalent chaperone activity with sulfenylated thiol proteins by forming mixed disulfides with members of the thiol proteome, and preferentially with sulfenylated cellular proteins, upon oxidative stress; these mixed disulfides can be subsequently reduced by low-molecular-weight thiols to regenerate YajL and reduced proteins. Involved in biogenesis of ribosomal proteins, probably as a ribosomal protein-folding chaperone. Confers resistance to oxidative stress. Plays an important role in protection against electrophile/carbonyl stress. The chaperone activity reported for YajL is probably recruited to execute its deglycase activity, to interact with non-native glycated proteins and gain access to partially buried glycated sites. Also displays an apparent glyoxalase activity that in fact reflects its deglycase activity. This is Protein/nucleic acid deglycase 3 (yajL) from Escherichia coli (strain K12).